Reading from the N-terminus, the 430-residue chain is Serine--tRNA ligase (430 aa).

Threonine 237–glutamate 239 is a binding site for L-serine. Arginine 268 to glutamate 270 is a binding site for ATP. Residue glutamate 291 participates in L-serine binding. Glutamate 355 to serine 358 lines the ATP pocket. Residue serine 391 participates in L-serine binding.

It belongs to the class-II aminoacyl-tRNA synthetase family. Type-1 seryl-tRNA synthetase subfamily. Homodimer. The tRNA molecule binds across the dimer.

The protein resides in the cytoplasm. The enzyme catalyses tRNA(Ser) + L-serine + ATP = L-seryl-tRNA(Ser) + AMP + diphosphate + H(+). The catalysed reaction is tRNA(Sec) + L-serine + ATP = L-seryl-tRNA(Sec) + AMP + diphosphate + H(+). It participates in aminoacyl-tRNA biosynthesis; selenocysteinyl-tRNA(Sec) biosynthesis; L-seryl-tRNA(Sec) from L-serine and tRNA(Sec): step 1/1. In terms of biological role, catalyzes the attachment of serine to tRNA(Ser). Is also able to aminoacylate tRNA(Sec) with serine, to form the misacylated tRNA L-seryl-tRNA(Sec), which will be further converted into selenocysteinyl-tRNA(Sec). This Magnetococcus marinus (strain ATCC BAA-1437 / JCM 17883 / MC-1) protein is Serine--tRNA ligase.